Consider the following 407-residue polypeptide: Putative polysaccharide ligase RF_0568 (407 aa).

Helical transmembrane passes span 15 to 35, 71 to 91, 100 to 120, 129 to 149, 166 to 186, 203 to 223, 229 to 249, 272 to 292, 324 to 344, and 379 to 399; these read LGMV…LMLF, MTIK…LFAI, FIQV…VPFG, LILG…SHGF, GCAL…SSGK, ISDS…FILA, IFFK…PVIA, LFIW…GYGF, ILQI…CLVY, and IWQI…KLLV.

This sequence belongs to the O-antigen ligase family.

It is found in the membrane. The polypeptide is Putative polysaccharide ligase RF_0568 (Rickettsia felis (strain ATCC VR-1525 / URRWXCal2) (Rickettsia azadi)).